The chain runs to 127 residues: Protein ApaG (127 aa).

Positions 3-127 (ANSPPTIKCN…FRLAIPNILH (125 aa)) constitute an ApaG domain.

This chain is Protein ApaG, found in Photobacterium profundum (strain SS9).